Reading from the N-terminus, the 221-residue chain is Histone H1C (221 aa).

Disordered stretches follow at residues 1 to 43 and 113 to 221; these read MSDP…PPVS and AAKK…AKKA. One can recognise an H15 domain in the interval 38 to 112; the sequence is THPPVSEMVF…GALGSFKLPA (75 aa). Basic residues-rich tracts occupy residues 141–167 and 175–221; these read KVKKTIAKKPKAATATKIKKPVAKTTK and AAKK…AKKA.

Belongs to the histone H1/H5 family.

It localises to the nucleus. It is found in the chromosome. Its function is as follows. Histones H1 are necessary for the condensation of nucleosome chains into higher-order structures. In Chironomus tentans (Midge), this protein is Histone H1C.